Here is a 1173-residue protein sequence, read N- to C-terminus: WASH complex subunit 4 (1173 aa).

At alanine 2 the chain carries N-acetylalanine. Serine 7 carries the post-translational modification Phosphoserine. The sufficient for interaction with WASHC5 stretch occupies residues 705–1173; that stretch reads KDLALFFSLN…STVSADPVVK (469 aa). Positions 1135 to 1161 form a coiled coil; the sequence is RADKTAAEENQEKKEKEEETKTSNGDL. The segment covering 1142 to 1155 has biased composition (basic and acidic residues); sequence EENQEKKEKEEETK. The tract at residues 1142-1173 is disordered; that stretch reads EENQEKKEKEEETKTSNGDLSDSTVSADPVVK. At threonine 1154 the chain carries Phosphothreonine. Residues 1157–1167 are compositionally biased toward polar residues; it reads SNGDLSDSTVS.

Belongs to the SWIP family. Component of the WASH core complex also described as WASH regulatory complex (SHRC) composed of WASH (WASHC1, WASH2P or WASH3P), WASHC2 (WASHC2A or WASHC2C), WASHC3, WASHC4 and WASHC5. The WASH core complex associates via WASHC2 with the F-actin-capping protein dimer (formed by CAPZA1, CAPZA2 or CAPZA3 and CAPZB) in a transient or substoichiometric manner which was initially described as WASH complex.

Its subcellular location is the early endosome. Acts as a component of the WASH core complex that functions as a nucleation-promoting factor (NPF) at the surface of endosomes, where it recruits and activates the Arp2/3 complex to induce actin polymerization, playing a key role in the fission of tubules that serve as transport intermediates during endosome sorting. The chain is WASH complex subunit 4 from Homo sapiens (Human).